A 508-amino-acid polypeptide reads, in one-letter code: Maturase K (508 aa).

It belongs to the intron maturase 2 family. MatK subfamily.

Its subcellular location is the plastid. The protein localises to the chloroplast. In terms of biological role, usually encoded in the trnK tRNA gene intron. Probably assists in splicing its own and other chloroplast group II introns. The protein is Maturase K of Gordonia lasianthus (Loblolly bay).